Reading from the N-terminus, the 375-residue chain is Succinyl-diaminopimelate desuccinylase (375 aa).

Histidine 66 is a Zn(2+) binding site. Aspartate 68 is an active-site residue. Aspartate 99 contacts Zn(2+). Glutamate 133 functions as the Proton acceptor in the catalytic mechanism. Residues glutamate 134, glutamate 162, and histidine 348 each contribute to the Zn(2+) site.

The protein belongs to the peptidase M20A family. DapE subfamily. Homodimer. Zn(2+) serves as cofactor. Co(2+) is required as a cofactor.

The enzyme catalyses N-succinyl-(2S,6S)-2,6-diaminopimelate + H2O = (2S,6S)-2,6-diaminopimelate + succinate. It functions in the pathway amino-acid biosynthesis; L-lysine biosynthesis via DAP pathway; LL-2,6-diaminopimelate from (S)-tetrahydrodipicolinate (succinylase route): step 3/3. Functionally, catalyzes the hydrolysis of N-succinyl-L,L-diaminopimelic acid (SDAP), forming succinate and LL-2,6-diaminopimelate (DAP), an intermediate involved in the bacterial biosynthesis of lysine and meso-diaminopimelic acid, an essential component of bacterial cell walls. This is Succinyl-diaminopimelate desuccinylase from Stenotrophomonas maltophilia (strain K279a).